Reading from the N-terminus, the 924-residue chain is Isoleucine--tRNA ligase (924 aa).

Residues 57–67 (PYANGDIHMGH) carry the 'HIGH' region motif. Residue E552 coordinates L-isoleucyl-5'-AMP. The short motif at 593–597 (KMSKS) is the 'KMSKS' region element. An ATP-binding site is contributed by K596. Residues C891, C894, C911, and C914 each contribute to the Zn(2+) site.

This sequence belongs to the class-I aminoacyl-tRNA synthetase family. IleS type 1 subfamily. Monomer. Zn(2+) serves as cofactor.

It is found in the cytoplasm. It carries out the reaction tRNA(Ile) + L-isoleucine + ATP = L-isoleucyl-tRNA(Ile) + AMP + diphosphate. In terms of biological role, catalyzes the attachment of isoleucine to tRNA(Ile). As IleRS can inadvertently accommodate and process structurally similar amino acids such as valine, to avoid such errors it has two additional distinct tRNA(Ile)-dependent editing activities. One activity is designated as 'pretransfer' editing and involves the hydrolysis of activated Val-AMP. The other activity is designated 'posttransfer' editing and involves deacylation of mischarged Val-tRNA(Ile). This is Isoleucine--tRNA ligase from Geobacillus thermodenitrificans (strain NG80-2).